A 176-amino-acid chain; its full sequence is Inorganic pyrophosphatase (176 aa).

Substrate-binding residues include lysine 31, arginine 45, and tyrosine 57. Mg(2+)-binding residues include aspartate 67, aspartate 72, and aspartate 104. Position 142 (tyrosine 142) interacts with substrate.

This sequence belongs to the PPase family. In terms of assembly, homohexamer. Mg(2+) serves as cofactor.

Its subcellular location is the cytoplasm. It catalyses the reaction diphosphate + H2O = 2 phosphate + H(+). In terms of biological role, catalyzes the hydrolysis of inorganic pyrophosphate (PPi) forming two phosphate ions. This Haemophilus influenzae (strain ATCC 51907 / DSM 11121 / KW20 / Rd) protein is Inorganic pyrophosphatase.